The sequence spans 486 residues: CDT1-like protein b (486 aa).

2 disordered regions span residues 273-294 (PEGGDDNSLRSTNSLARGPSRS) and 348-371 (VKDDISNESGDEKSNYEGDNASDD). The segment covering 281 to 294 (LRSTNSLARGPSRS) has biased composition (polar residues). Residues 348–363 (VKDDISNESGDEKSNY) show a composition bias toward basic and acidic residues.

Belongs to the Cdt1 family. In terms of tissue distribution, expressed in proliferating (e.g. shoot and root apical meristems, organ primordia, guard cells and stomatal lineage) and endoreplicating cells (e.g. developing trichomes).

It localises to the nucleus. Member of the pre-replication complex. Regulates endoreduplication. Involved in the coordination of cell and plastid division. This Arabidopsis thaliana (Mouse-ear cress) protein is CDT1-like protein b (CDT1B).